The sequence spans 176 residues: ATP-dependent protease subunit HslV (176 aa).

The active site involves T5. A161, C164, and T167 together coordinate Na(+).

Belongs to the peptidase T1B family. HslV subfamily. A double ring-shaped homohexamer of HslV is capped on each side by a ring-shaped HslU homohexamer. The assembly of the HslU/HslV complex is dependent on binding of ATP.

The protein resides in the cytoplasm. It carries out the reaction ATP-dependent cleavage of peptide bonds with broad specificity.. Allosterically activated by HslU binding. Protease subunit of a proteasome-like degradation complex believed to be a general protein degrading machinery. The sequence is that of ATP-dependent protease subunit HslV from Caldicellulosiruptor saccharolyticus (strain ATCC 43494 / DSM 8903 / Tp8T 6331).